Here is a 205-residue protein sequence, read N- to C-terminus: Holliday junction branch migration complex subunit RuvA (205 aa).

The interval 1–64 is domain I; that stretch reads MIGRIRGLLV…EDAQLLYGFI (64 aa). The tract at residues 65–143 is domain II; sequence SKQERALFRL…SLMEASVGSE (79 aa). The tract at residues 144–156 is flexible linker; that stretch reads REFMLQSNYTAPV. The tract at residues 157-205 is domain III; that stretch reads VANTAEEDAIAALLSLGYKPAQASKAVSAVYVDGIDSESLIKSALKSML.

This sequence belongs to the RuvA family. Homotetramer. Forms an RuvA(8)-RuvB(12)-Holliday junction (HJ) complex. HJ DNA is sandwiched between 2 RuvA tetramers; dsDNA enters through RuvA and exits via RuvB. An RuvB hexamer assembles on each DNA strand where it exits the tetramer. Each RuvB hexamer is contacted by two RuvA subunits (via domain III) on 2 adjacent RuvB subunits; this complex drives branch migration. In the full resolvosome a probable DNA-RuvA(4)-RuvB(12)-RuvC(2) complex forms which resolves the HJ.

The protein localises to the cytoplasm. Functionally, the RuvA-RuvB-RuvC complex processes Holliday junction (HJ) DNA during genetic recombination and DNA repair, while the RuvA-RuvB complex plays an important role in the rescue of blocked DNA replication forks via replication fork reversal (RFR). RuvA specifically binds to HJ cruciform DNA, conferring on it an open structure. The RuvB hexamer acts as an ATP-dependent pump, pulling dsDNA into and through the RuvAB complex. HJ branch migration allows RuvC to scan DNA until it finds its consensus sequence, where it cleaves and resolves the cruciform DNA. This Shewanella piezotolerans (strain WP3 / JCM 13877) protein is Holliday junction branch migration complex subunit RuvA.